Here is a 226-residue protein sequence, read N- to C-terminus: Respiratory nitrate reductase 2 gamma chain (226 aa).

The Periplasmic portion of the chain corresponds to 1–4; the sequence is MIQY. Residues 5–30 traverse the membrane as a helical segment; it reads LNVFFYDIYPYICATVFFLGSWLRYD. The Cytoplasmic portion of the chain corresponds to 31-48; the sequence is YGQYTWRASSSQMLDKRG. The helical transmembrane segment at 49-71 threads the bilayer; it reads MVIWSNLFHIGILGIFFGHLFGM. Heme b contacts are provided by His-57 and His-67. Residues 72 to 83 are Periplasmic-facing; it reads LTPHWMYAWFLP. Residues 84–113 form a helical membrane-spanning segment; that stretch reads VAAKQLMAMVLGGICGVLTLIGGAGLLWRR. At 114 to 125 the chain is on the cytoplasmic side; that stretch reads LTNQRVRATSTT. The chain crosses the membrane as a helical span at residues 126 to 149; sequence PDIIIMSILLIQCLLGLSTIPFSA. Residues 150–183 are Periplasmic-facing; sequence QYPDGSEMMKLVGWAQSIVTFRGGSSEMLNGVAF. A helical transmembrane segment spans residues 184-199; it reads VFRLHLVLGMTIFLLF. The heme b site is built by His-188 and His-206. The Cytoplasmic portion of the chain corresponds to 200–226; sequence PFTRLVHVWSAPFEYFTRRYQIVRSRR.

As to quaternary structure, dimer of heterotrimers each composed of an alpha, a beta and a gamma chain. Alpha and beta are catalytic chains; gamma chains are involved in binding the enzyme complex to the cytoplasmic membrane. Heme serves as cofactor.

Its subcellular location is the cell inner membrane. The enzyme catalyses nitrate + a quinol = a quinone + nitrite + H2O. Its function is as follows. This is a second nitrate reductase enzyme which can substitute for the NRA enzyme and allows E.coli to use nitrate as an electron acceptor during anaerobic growth. The gamma chain is a membrane-embedded heme-iron unit resembling cytochrome b, which transfers electrons from quinones to the beta subunit. The polypeptide is Respiratory nitrate reductase 2 gamma chain (narV) (Escherichia coli (strain K12)).